Consider the following 282-residue polypeptide: Trihydroxynaphthalene reductase PfmaI (282 aa).

Positions 41, 114, and 147 each coordinate NADP(+). Catalysis depends on proton donor residues Ser164 and Tyr178. NADP(+)-binding residues include Tyr178, Lys182, Ile211, and Thr213. The Lowers pKa of active site Tyr role is filled by Lys182.

This sequence belongs to the short-chain dehydrogenases/reductases (SDR) family.

Its pathway is pigment biosynthesis; melanin biosynthesis. Its function is as follows. Trihydroxynaphthalene reductase involved the biosynthesis of dihydroxynaphthalene (DHN)-melanin, a bluish-green pigment forming a dark layer in the conidial wall that protects the conidia from UV radiations. The first step of the pathway is the production of the pentaketide 1,3,6,8-tetrahydroxynaphthalene (1,3,6,8-THN or T4HN) by the polyketide synthase PfmaE though condensation of acetyl-CoA with malonyl-CoA. T4HN is not stable and easily oxidizes into the stable form flaviolin. T4HN is also substrate of the hydroxynaphthalene reductase PfmaG to yield scytalone. The scytalone dehydratase PfmaJ then reduces scytalone to 1,3,8-THN. 1,3,8-THN is then substrate of the hydroxynaphthalene reductase PfmaI to yield vermelone. Vermelone is further converted by the multicopper oxidase PfmaD to 1,8-DHN. Finally the laccase PFICI_06862 transforms 1,8-DHN to DHN-melanin. The roles of the 5-oxoprolinase PfmaA and the proline iminopeptidase PfmaB within the cluster have not been elucidated yet. This is Trihydroxynaphthalene reductase PfmaI from Pestalotiopsis fici (strain W106-1 / CGMCC3.15140).